The primary structure comprises 327 residues: WRKY transcription factor WRKY76 (327 aa).

Residues 56-76 (AKIVEAKVTQMSEENRRLTEV) adopt a coiled-coil conformation. The segment at 87–135 (RLGLDGSASPPRPVSPLSGKKRSRESMETANSCDANSNRHQGGDADHAE) is disordered. The Nuclear localization signal signature appears at 106 to 112 (KKRSRES). Positions 114 to 126 (ETANSCDANSNRH) are enriched in polar residues. Positions 160–226 (DTSLVVKDGY…YEGEHNHPHP (67 aa)) form a DNA-binding region, WRKY.

The protein belongs to the WRKY group II-a family.

The protein localises to the nucleus. Its function is as follows. Transcription repressor. Interacts specifically with the W box (5'-(T)TGAC[CT]-3'), a frequently occurring elicitor-responsive cis-acting element. Regulates, probably indirectly, the activation of defense-related genes during defense response. Modulates plant innate immunity against X.oryzae pv. oryzae (Xoo). The polypeptide is WRKY transcription factor WRKY76 (Oryza sativa subsp. japonica (Rice)).